Reading from the N-terminus, the 223-residue chain is MIFAANLKCNHTRASFKIYAEILNKTMGAKCDDIIVFPPSVAFLENENNFMQGAQNFYPCVNGAFTGELGKEHLDEFGIKCVLIGHSERRALGDEELIKVKFNFAKEHGYKIIFCIGENLDTKNSGKTLEFLKKQLEIIDLNYEKLIIAYEPIYSIGTGVSAQTADIAKVLEFLASLTKVPLLYGGSVNENNIKEILSVNHCGGVLIGSAALKVENFIKLIKG.

6-8 contributes to the substrate binding site; it reads NLK. H86 acts as the Electrophile in catalysis. E151 functions as the Proton acceptor in the catalytic mechanism. Substrate is bound by residues G157 and S187.

Belongs to the triosephosphate isomerase family. As to quaternary structure, homodimer.

It localises to the cytoplasm. It carries out the reaction D-glyceraldehyde 3-phosphate = dihydroxyacetone phosphate. It functions in the pathway carbohydrate biosynthesis; gluconeogenesis. It participates in carbohydrate degradation; glycolysis; D-glyceraldehyde 3-phosphate from glycerone phosphate: step 1/1. Its function is as follows. Involved in the gluconeogenesis. Catalyzes stereospecifically the conversion of dihydroxyacetone phosphate (DHAP) to D-glyceraldehyde-3-phosphate (G3P). This Campylobacter jejuni subsp. doylei (strain ATCC BAA-1458 / RM4099 / 269.97) protein is Triosephosphate isomerase.